A 334-amino-acid polypeptide reads, in one-letter code: Delta(1)-pyrroline-2-carboxylate/Delta(1)-piperideine-2-carboxylate reductase (334 aa).

The active-site Charge relay system is the S44. The Proton donor role is filled by H45. R49 lines the substrate pocket. H117–L121 is an NADP(+) binding site. T157 serves as a coordination point for substrate. D175–A177 is a binding site for NADP(+). R183–G184 serves as a coordination point for substrate. E185 functions as the Charge relay system in the catalytic mechanism. Residues H226–K227 and R301–R307 each bind NADP(+).

It belongs to the LDH2/MDH2 oxidoreductase family. In terms of assembly, homodimer.

The catalysed reaction is L-pipecolate + NADP(+) = Delta(1)-piperideine-2-carboxylate + NADPH + H(+). It carries out the reaction L-proline + NADP(+) = 1-pyrroline-2-carboxylate + NADPH + H(+). The enzyme catalyses cis-4-hydroxy-L-proline + NADP(+) = Delta(1)-pyrroline-(4S)-hydroxy-2-carboxylate + NADPH + 2 H(+). In terms of biological role, catalyzes the reduction of both Delta(1)-pyrroline-2-carboxylate (Pyr2C) and Delta(1)-piperideine-2-carboxylate (Pip2C) to L-proline and L-pipecolate, respectively, using NADPH as the electron donor. Cannot use NADH instead of NADPH. Is likely involved in a degradation pathway that converts trans-3-hydroxy-L-proline (t3LHyp) to L-proline, which would allow P.aeruginosa to grow on t3LHyp as a sole carbon source. Can also catalyze the reverse oxidation reactions, albeit at a much lower rate. Is also able to use Delta(1)-pyrroline-(4S)-hydroxy-2-carboxylate (Pyr4SH2C) and cis-4-hydroxy-L-proline (c4LHyp) as substrates, and might be involved in the metabolism of c4LHyp, a compound which is generated by the hydroxylation of free L-proline in bacteria. This chain is Delta(1)-pyrroline-2-carboxylate/Delta(1)-piperideine-2-carboxylate reductase, found in Pseudomonas aeruginosa (strain ATCC 15692 / DSM 22644 / CIP 104116 / JCM 14847 / LMG 12228 / 1C / PRS 101 / PAO1).